We begin with the raw amino-acid sequence, 174 residues long: Sarcoplasmic calcium-binding protein (174 aa).

An N-acetylserine modification is found at Ser1. EF-hand domains follow at residues 3–38 (LWVQ…FAKE), 55–90 (GVWD…EAKS), 91–126 (VVEG…LGLD), and 127–160 (KTMA…FFMN). Ca(2+)-binding residues include Asp16, Asp18, Asp20, and Asp27. Residues Asp104, Asn106, Asp108, Asn110, Glu115, Asp138, Asn140, Asp142, and Glu149 each coordinate Ca(2+).

In terms of biological role, like parvalbumins, SCPs seem to be more abundant in fast contracting muscles, but no functional relationship can be established from this distribution. This is Sarcoplasmic calcium-binding protein from Hediste diversicolor (Sandworm).